A 471-amino-acid chain; its full sequence is Mitochondrial distribution and morphology protein 10 (471 aa).

The interval 429 to 455 (PSSFSSPSRAANSTPAGGGQSVGGGIS) is disordered. The span at 444 to 455 (AGGGQSVGGGIS) shows a compositional bias: gly residues.

Belongs to the MDM10 family. Component of the ER-mitochondria encounter structure (ERMES) or MDM complex, composed of mmm1, mdm10, mdm12 and mdm34. Associates with the mitochondrial outer membrane sorting assembly machinery SAM(core) complex.

It localises to the mitochondrion outer membrane. In terms of biological role, component of the ERMES/MDM complex, which serves as a molecular tether to connect the endoplasmic reticulum and mitochondria. Components of this complex are involved in the control of mitochondrial shape and protein biogenesis and may function in phospholipid exchange. mdm10 is involved in the late assembly steps of the general translocase of the mitochondrial outer membrane (TOM complex). Functions in the tom40-specific route of the assembly of outer membrane beta-barrel proteins, including the association of tom40 with the receptor tom22 and small TOM proteins. Can associate with the SAM(core) complex as well as the mdm12-mmm1 complex, both involved in late steps of the major beta-barrel assembly pathway, that is responsible for biogenesis of all outer membrane beta-barrel proteins. May act as a switch that shuttles between both complexes and channels precursor proteins into the tom40-specific pathway. Plays a role in mitochondrial morphology and in the inheritance of mitochondria. The protein is Mitochondrial distribution and morphology protein 10 (mdmB) of Aspergillus fumigatus (strain ATCC MYA-4609 / CBS 101355 / FGSC A1100 / Af293) (Neosartorya fumigata).